A 447-amino-acid chain; its full sequence is UPF0210 protein lp_2507 (447 aa).

Belongs to the UPF0210 family. In terms of assembly, homodimer.

The polypeptide is UPF0210 protein lp_2507 (Lactiplantibacillus plantarum (strain ATCC BAA-793 / NCIMB 8826 / WCFS1) (Lactobacillus plantarum)).